A 163-amino-acid polypeptide reads, in one-letter code: Low molecular weight protein-tyrosine phosphatase A (163 aa).

The Nucleophile role is filled by Cys-11. Arg-17 is an active-site residue. Asp-126 acts as the Proton donor in catalysis.

It belongs to the low molecular weight phosphotyrosine protein phosphatase family.

It carries out the reaction O-phospho-L-tyrosyl-[protein] + H2O = L-tyrosyl-[protein] + phosphate. Key virulence factor required for mycobacterial survival within host macrophages. Exhibits protein tyrosine phosphatase activity. Functionally, supports mycobacteria survival during infection by modulation of the phagosome maturation and modulation of the normal host signaling pathways, including host innate immune responses and cell apoptosis. This is Low molecular weight protein-tyrosine phosphatase A (ptpA) from Mycobacterium bovis (strain ATCC BAA-935 / AF2122/97).